The primary structure comprises 512 residues: MLFQDLSFPAAIGAVFGAVAISVAARCIYDLFFHPLRNFPGPKRAAIWSFYEFYYDVIRDGTYLWEIEKMHQKYGPIVRINSRSLHIHDPEYFNTIYAGSGRKVNKELSAVSGYTFPHSTISTLDHDLHRKRRAIVSPYFSKRAIAEIEPVIHERLNVLISRLAEAKGSIVDLTSAFSAYTADVVTYHFYGTHANYIGSKDFKYGLKDALTVLLNLYNLTRFLPVPANTLKNLPLPILGLINPNFPLVVSAREANKKMVLGYLNKPDEDKKAMKDARSKSVIVSALTDPNVPDAEKTLDRLLDEGETIIFAGIDTTARTLGVALFHLLNNKDVLMKLRKELQAVAKPDGQQWTTTELEAVPYMRGVVQEAIRLAYGLVVRIPRISPHEALRYNGFVIPPGTPVSQSTYLVNNDPSVFPNPQVFDPERWVKAAQDGVSLDKYMVSFSKGSRGCLGINLAYAKLYLGIARVATSLDMELFETTAKAISVYHTRGFAFPKEGDGAVKARVMGLCK.

A helical transmembrane segment spans residues 5-25 (DLSFPAAIGAVFGAVAISVAA). C452 is a binding site for heme.

This sequence belongs to the cytochrome P450 family. Requires heme as cofactor.

The protein resides in the membrane. It participates in secondary metabolite biosynthesis; terpenoid biosynthesis. In terms of biological role, cytochrome P450 monooxygenase; part of the gene cluster that mediates the biosynthesis of the sesquiterpenoid aspterric acid (AA), an inhibitor of dihydroxy-acid dehydratase (DHAD) effective as an herbicide. AstB catalyzes the second step within the pathway and converts (-)-daucane produced by the terpene cyclase astA into an alpha-epoxy carboxylate intermediate which is further converted into the tricyclic aspterric acid by the cytochrome P450 monooxygenase astC. This chain is Cytochrome P450 monooxygenase astB, found in Aspergillus terreus (strain NIH 2624 / FGSC A1156).